The primary structure comprises 470 residues: Acyltransferase BOA11 (470 aa).

Catalysis depends on histidine 156, which acts as the Proton acceptor.

It belongs to the plant acyltransferase family.

It participates in polyketide biosynthesis. Acyltransferase; part of the gene cluster B that mediates the biosynthesis of botcinic acid and its botcinin derivatives, acetate-derived polyketides that contribute to virulence when combined with the sesquiterpene botrydial. Botcinic acid and its derivatives have been shown to induce chlorosis and necrosis during host plant infection, but also have antifungal activities. Two polyketide synthases, BOA6 and BOA9, are involved in the biosynthesis of botcinins. BOA6 mediates the formation of the per-methylated tetraketide core by condensation of four units of malonyl-CoA with one unit of acetyl-CoA, which would be methylated in activated methylene groups to yield a bicyclic acid intermediate that could then either be converted to botrylactone derivatives or lose the starter acetate unit through a retro-Claisen type C-C bond cleavage to yield botcinin derivatives. The second polyketide synthase, BOA9, is probably required for the biosynthesis of the tetraketide side chain of botcinins. The methyltransferase (MT) domain within BOA6 is probably responsible for the incorporation of four methyl groups. The trans-enoyl reductase BOA5 might take over the enoyl reductase function of BOA6 that misses an ER domain. The monooxygenases BOA2, BOA3 and BOA4 might be involved in further hydroxylations at C4, C5 and C8, whereas BOA7, close to BOA9, could potentially be involved in the hydroxylation at C4 in the side chain of botcinins. The chain is Acyltransferase BOA11 from Botryotinia fuckeliana (strain B05.10) (Noble rot fungus).